The chain runs to 282 residues: 3-methyl-2-oxobutanoate hydroxymethyltransferase (282 aa).

Residues aspartate 63 and aspartate 102 each coordinate Mg(2+). 3-methyl-2-oxobutanoate is bound by residues 63-64 (DS), aspartate 102, and lysine 132. Residue glutamate 134 coordinates Mg(2+). The Proton acceptor role is filled by glutamate 200.

It belongs to the PanB family. As to quaternary structure, homodecamer; pentamer of dimers. Mg(2+) is required as a cofactor.

It is found in the cytoplasm. It catalyses the reaction 3-methyl-2-oxobutanoate + (6R)-5,10-methylene-5,6,7,8-tetrahydrofolate + H2O = 2-dehydropantoate + (6S)-5,6,7,8-tetrahydrofolate. The protein operates within cofactor biosynthesis; (R)-pantothenate biosynthesis; (R)-pantoate from 3-methyl-2-oxobutanoate: step 1/2. Functionally, catalyzes the reversible reaction in which hydroxymethyl group from 5,10-methylenetetrahydrofolate is transferred onto alpha-ketoisovalerate to form ketopantoate. The protein is 3-methyl-2-oxobutanoate hydroxymethyltransferase of Mycobacterium sp. (strain JLS).